We begin with the raw amino-acid sequence, 867 residues long: MSLSAHEIRELFLSFFEKKGHTRVKSAPLVPENDPTLLFVNAGMVPFKNVFLGLEKRPYKRATSCQKCLRVSGKHNDLEQVGYTSRHHTFFEMLGNFSFGDYFKKEAIEYAWEFVTEVLKLPKEKLYVSVYKDDEEAYRIWNEHIGIPSERIWRLGEEDNFWQMGDVGPCGPSSEIYVDRGEEYEGDERYLEIWNLVFMQYNRDENGVLTPLPHPNIDTGMGLERIASVLQGKNSNFEIDIIFPLIQFGEEVSGKKYGEKFETDVALRVIADHLRAITFAISDGVIPSNEGRGYVIRRILRRAMRFGYKLGIENPFLYKGVDLVVDIMKEPYPELELSREFVKGIVKGEEKRFIKTLKAGMEYIQEVIQKALEEGRKTLSGKEVFTAYDTYGFPVDLIDEIAREKGLGIDLEGFQCELEEQRERARKHFKVEAKKVKPVYSHLKELGKTSAFVGYEHMEWESQVVGLVKGEGLVSELKEGEEGEVVLKETPFYPEGGGQIGDAGIIESDKALFKVEDTQKPTEGIIVHIGKVLKGTLKVGDTVHARVDKERRWDIMRNHTATHLLHAALRNVLGEHVRQAGSLVADKYLRFDFTHFSALTEEELKRVEELVNEKIRENLPVNVMEMAYDEALKTGAIAIFEEKYGERVRVISCGEFSKELCGGTHVSATGDIGYFKIISESSVGAGVRRIVAQTGRWSVETAFKEHQTLKKASSALGVGEEEVIQKIEELKEEIKDREREIQRLKQELLKLQIREVVKEENVGDFTLHYGVFEEVEPEELRNLADMLRQRTKKDVVFIASRKGDKINFVIGVSKEISDKVNAKEVIREVGKVLKGGGGGRADLAQGGGKAPDKFPEAVKLLKEILSG.

The Zn(2+) site is built by H559, H563, C661, and H665.

It belongs to the class-II aminoacyl-tRNA synthetase family. It depends on Zn(2+) as a cofactor.

It localises to the cytoplasm. The catalysed reaction is tRNA(Ala) + L-alanine + ATP = L-alanyl-tRNA(Ala) + AMP + diphosphate. In terms of biological role, catalyzes the attachment of alanine to tRNA(Ala) in a two-step reaction: alanine is first activated by ATP to form Ala-AMP and then transferred to the acceptor end of tRNA(Ala). Also edits incorrectly charged Ser-tRNA(Ala) and Gly-tRNA(Ala) via its editing domain. The polypeptide is Alanine--tRNA ligase (Aquifex aeolicus (strain VF5)).